A 246-amino-acid polypeptide reads, in one-letter code: NADH-quinone oxidoreductase subunit C (246 aa).

The protein belongs to the complex I 30 kDa subunit family. In terms of assembly, NDH-1 is composed of 14 different subunits. Subunits NuoB, C, D, E, F, and G constitute the peripheral sector of the complex.

It is found in the cell inner membrane. It carries out the reaction a quinone + NADH + 5 H(+)(in) = a quinol + NAD(+) + 4 H(+)(out). NDH-1 shuttles electrons from NADH, via FMN and iron-sulfur (Fe-S) centers, to quinones in the respiratory chain. The immediate electron acceptor for the enzyme in this species is believed to be ubiquinone. Couples the redox reaction to proton translocation (for every two electrons transferred, four hydrogen ions are translocated across the cytoplasmic membrane), and thus conserves the redox energy in a proton gradient. This chain is NADH-quinone oxidoreductase subunit C, found in Halorhodospira halophila (strain DSM 244 / SL1) (Ectothiorhodospira halophila (strain DSM 244 / SL1)).